A 100-amino-acid chain; its full sequence is Small ribosomal subunit protein uS14c (100 aa).

This sequence belongs to the universal ribosomal protein uS14 family. Part of the 30S ribosomal subunit.

The protein localises to the plastid. It is found in the chloroplast. Binds 16S rRNA, required for the assembly of 30S particles. The protein is Small ribosomal subunit protein uS14c of Buxus microphylla (Littleleaf boxwood).